The chain runs to 129 residues: D-ribose pyranase (129 aa).

Histidine 20 (proton donor) is an active-site residue. Substrate-binding positions include aspartate 28, histidine 96, and 118 to 120; that span reads YAN.

It belongs to the RbsD / FucU family. RbsD subfamily. In terms of assembly, homodecamer.

The protein resides in the cytoplasm. It carries out the reaction beta-D-ribopyranose = beta-D-ribofuranose. It participates in carbohydrate metabolism; D-ribose degradation; D-ribose 5-phosphate from beta-D-ribopyranose: step 1/2. Catalyzes the interconversion of beta-pyran and beta-furan forms of D-ribose. This is D-ribose pyranase from Halalkalibacterium halodurans (strain ATCC BAA-125 / DSM 18197 / FERM 7344 / JCM 9153 / C-125) (Bacillus halodurans).